Reading from the N-terminus, the 121-residue chain is Phosphoribosyl-ATP pyrophosphatase (121 aa).

Belongs to the PRA-PH family.

Its subcellular location is the cytoplasm. It carries out the reaction 1-(5-phospho-beta-D-ribosyl)-ATP + H2O = 1-(5-phospho-beta-D-ribosyl)-5'-AMP + diphosphate + H(+). Its pathway is amino-acid biosynthesis; L-histidine biosynthesis; L-histidine from 5-phospho-alpha-D-ribose 1-diphosphate: step 2/9. The polypeptide is Phosphoribosyl-ATP pyrophosphatase (Burkholderia cenocepacia (strain HI2424)).